The primary structure comprises 295 residues: Pyridoxal 5'-phosphate synthase subunit PdxS (295 aa).

A D-ribose 5-phosphate-binding site is contributed by D25. K82 acts as the Schiff-base intermediate with D-ribose 5-phosphate in catalysis. A D-ribose 5-phosphate-binding site is contributed by G154. R166 lines the D-glyceraldehyde 3-phosphate pocket. D-ribose 5-phosphate-binding positions include G215 and 236–237; that span reads GS.

Belongs to the PdxS/SNZ family. In terms of assembly, in the presence of PdxT, forms a dodecamer of heterodimers.

It carries out the reaction aldehydo-D-ribose 5-phosphate + D-glyceraldehyde 3-phosphate + L-glutamine = pyridoxal 5'-phosphate + L-glutamate + phosphate + 3 H2O + H(+). The protein operates within cofactor biosynthesis; pyridoxal 5'-phosphate biosynthesis. Catalyzes the formation of pyridoxal 5'-phosphate from ribose 5-phosphate (RBP), glyceraldehyde 3-phosphate (G3P) and ammonia. The ammonia is provided by the PdxT subunit. Can also use ribulose 5-phosphate and dihydroxyacetone phosphate as substrates, resulting from enzyme-catalyzed isomerization of RBP and G3P, respectively. This chain is Pyridoxal 5'-phosphate synthase subunit PdxS, found in Bacillus cereus (strain B4264).